Consider the following 230-residue polypeptide: Ribose-5-phosphate isomerase A (230 aa).

Substrate-binding positions include 31–34 (TGST), 88–91 (DGSD), and 101–104 (KGGG). The active-site Proton acceptor is the Glu110. Position 128 (Lys128) interacts with substrate.

It belongs to the ribose 5-phosphate isomerase family. As to quaternary structure, homodimer.

The catalysed reaction is aldehydo-D-ribose 5-phosphate = D-ribulose 5-phosphate. It participates in carbohydrate degradation; pentose phosphate pathway; D-ribose 5-phosphate from D-ribulose 5-phosphate (non-oxidative stage): step 1/1. Its function is as follows. Catalyzes the reversible conversion of ribose-5-phosphate to ribulose 5-phosphate. This chain is Ribose-5-phosphate isomerase A, found in Lactobacillus helveticus (strain DPC 4571).